Reading from the N-terminus, the 426-residue chain is tRNA(Ile)-lysidine synthase (426 aa).

21-26 lines the ATP pocket; sequence SGGLDS.

It belongs to the tRNA(Ile)-lysidine synthase family.

Its subcellular location is the cytoplasm. The enzyme catalyses cytidine(34) in tRNA(Ile2) + L-lysine + ATP = lysidine(34) in tRNA(Ile2) + AMP + diphosphate + H(+). Functionally, ligates lysine onto the cytidine present at position 34 of the AUA codon-specific tRNA(Ile) that contains the anticodon CAU, in an ATP-dependent manner. Cytidine is converted to lysidine, thus changing the amino acid specificity of the tRNA from methionine to isoleucine. This is tRNA(Ile)-lysidine synthase from Enterobacter sp. (strain 638).